The sequence spans 322 residues: ATP-dependent 6-phosphofructokinase (322 aa).

ATP is bound at residue glycine 11. Residue 21–25 coordinates ADP; that stretch reads RAVVR. Residues 72–73 and 102–105 each bind ATP; these read RC and GDGS. Aspartate 103 is a binding site for Mg(2+). Residue 127–129 participates in substrate binding; that stretch reads TID. Aspartate 129 functions as the Proton acceptor in the catalytic mechanism. Arginine 156 is a binding site for ADP. Substrate contacts are provided by residues arginine 164 and 171–173; that span reads MGR. ADP-binding positions include 187–189, arginine 213, and 215–217; these read GAE and KKH. Residues glutamate 224, arginine 245, and 251-254 contribute to the substrate site; that span reads HVQR.

Belongs to the phosphofructokinase type A (PFKA) family. ATP-dependent PFK group I subfamily. Prokaryotic clade 'B1' sub-subfamily. In terms of assembly, homotetramer. Requires Mg(2+) as cofactor.

The protein localises to the cytoplasm. It catalyses the reaction beta-D-fructose 6-phosphate + ATP = beta-D-fructose 1,6-bisphosphate + ADP + H(+). It functions in the pathway carbohydrate degradation; glycolysis; D-glyceraldehyde 3-phosphate and glycerone phosphate from D-glucose: step 3/4. With respect to regulation, allosterically activated by ADP and other diphosphonucleosides, and allosterically inhibited by phosphoenolpyruvate. In terms of biological role, catalyzes the phosphorylation of D-fructose 6-phosphate to fructose 1,6-bisphosphate by ATP, the first committing step of glycolysis. This is ATP-dependent 6-phosphofructokinase from Staphylococcus aureus (strain JH1).